Here is a 333-residue protein sequence, read N- to C-terminus: Casein kinase II subunit beta-1 (333 aa).

Residues 58–78 (VEPEDDDDEEEEDEEDEEDMS) are compositionally biased toward acidic residues. 2 disordered regions span residues 58 to 92 (VEPE…ERRH) and 282 to 333 (ARRY…ESEL). Over residues 305–316 (ASRRRGPPRRQK) the composition is skewed to basic residues.

This sequence belongs to the casein kinase 2 subunit beta family. As to quaternary structure, tetramer composed of two alpha chains, one beta chain and one beta' chain. Phosphorylated by alpha subunit.

Regulatory subunit of casein kinase II/CK2. As part of the kinase complex regulates the basal catalytic activity of the alpha subunit a constitutively active serine/threonine-protein kinase that phosphorylates a large number of substrates containing acidic residues C-terminal to the phosphorylated serine or threonine. This Neurospora crassa (strain ATCC 24698 / 74-OR23-1A / CBS 708.71 / DSM 1257 / FGSC 987) protein is Casein kinase II subunit beta-1 (ckb-1).